Here is a 452-residue protein sequence, read N- to C-terminus: cAMP-dependent protein kinase regulatory subunit (452 aa).

Positions 28–212 (QFCANYFNSK…ELSKTLGSNF (185 aa)) are dimerization and phosphorylation. Residues 74–163 (IMTTNKRQPS…APPVPKSKIP (90 aa)) are disordered. The span at 75–84 (MTTNKRQPSF) shows a compositional bias: polar residues. Residues 95–106 (SIDHHHDDDPKE) are compositionally biased toward basic and acidic residues. The residue at position 173 (Ser-173) is a Phosphoserine. A nucleoside 3',5'-cyclic phosphate-binding positions include 213 to 330 (LFRQ…FLKD) and 333 to 451 (VLSS…QGSS). 3',5'-cyclic AMP contacts are provided by Glu-278, Arg-287, Glu-399, and Arg-408.

Belongs to the cAMP-dependent kinase regulatory chain family. In terms of assembly, tetramer, composed of 2 regulatory (R) and 2 catalytic (C) subunits. In the presence of cAMP it dissociates into 2 active monomeric C subunits and an R dimer.

The chain is cAMP-dependent protein kinase regulatory subunit (PKAR) from Debaryomyces hansenii (strain ATCC 36239 / CBS 767 / BCRC 21394 / JCM 1990 / NBRC 0083 / IGC 2968) (Yeast).